Consider the following 481-residue polypeptide: UDP-glycosyltransferase 72B3 (481 aa).

UDP-alpha-D-glucose is bound by residues Ser277, 347–349 (APQ), 364–372 (HCGWNSSLE), and 386–389 (YAEQ).

Belongs to the UDP-glycosyltransferase family.

Possesses low quercetin 3-O-glucosyltransferase activity in vitro. This is UDP-glycosyltransferase 72B3 (UGT72B3) from Arabidopsis thaliana (Mouse-ear cress).